We begin with the raw amino-acid sequence, 207 residues long: Ribonuclease HII (207 aa).

An RNase H type-2 domain is found at 12–201; sequence DLVAGVDEVG…VRAAWEVREG (190 aa). Residues aspartate 18, glutamate 19, and aspartate 110 each contribute to the a divalent metal cation site.

Belongs to the RNase HII family. Mn(2+) is required as a cofactor. The cofactor is Mg(2+).

The protein localises to the cytoplasm. It carries out the reaction Endonucleolytic cleavage to 5'-phosphomonoester.. Endonuclease that specifically degrades the RNA of RNA-DNA hybrids. The polypeptide is Ribonuclease HII (Pseudomonas putida (strain ATCC 700007 / DSM 6899 / JCM 31910 / BCRC 17059 / LMG 24140 / F1)).